The chain runs to 1158 residues: cGMP-specific 3',5'-cyclic phosphodiesterase (1158 aa).

Disordered regions lie at residues 1–137 (MTDV…SQHD) and 195–216 (SPTV…SIPE). Low complexity predominate over residues 30–71 (ATTSAAASASSSQAKPLTNGAKKAATAAAAAGAEEGGASASN). Residues 108 to 135 (GSTSKSSSIHTQTSQQERAGRPTSSASQ) show a composition bias toward polar residues. The span at 202–215 (SPRSLSNSSASSIP) shows a compositional bias: low complexity. GAF domains follow at residues 242–394 (DIDV…GIGI) and 426–640 (NLEC…GLGI). The PDEase domain maps to 670-993 (SQDQTEKLTQ…RNWQDLAEKV (324 aa)). Catalysis depends on His746, which acts as the Proton donor. A divalent metal cation contacts are provided by His750, His786, Asp787, and Asp897. 2 disordered regions span residues 1034–1065 (QSQQ…TGAL) and 1097–1158 (VSED…CALL). Residues 1041-1052 (GSEDSHTPEHQR) are compositionally biased toward basic and acidic residues. Residues 1114-1130 (AAGSMGRMSASSSTSSA) are compositionally biased toward low complexity. Residues 1148–1158 (SKKRSKLCALL) show a composition bias toward basic residues. Position 1155 is a cysteine methyl ester (Cys1155). Cys1155 carries the S-farnesyl cysteine lipid modification. Positions 1156-1158 (ALL) are cleaved as a propeptide — removed in mature form.

Belongs to the cyclic nucleotide phosphodiesterase family. In terms of assembly, interacts with PrBP. A divalent metal cation serves as cofactor.

The protein resides in the cell membrane. The catalysed reaction is 3',5'-cyclic GMP + H2O = GMP + H(+). In terms of biological role, has a role regulating cGMP transport in Malpighian tubule principal cells. The protein is cGMP-specific 3',5'-cyclic phosphodiesterase of Drosophila ananassae (Fruit fly).